The chain runs to 705 residues: Glycine--tRNA ligase beta subunit (705 aa).

It belongs to the class-II aminoacyl-tRNA synthetase family. As to quaternary structure, tetramer of two alpha and two beta subunits.

The protein resides in the cytoplasm. It carries out the reaction tRNA(Gly) + glycine + ATP = glycyl-tRNA(Gly) + AMP + diphosphate. This chain is Glycine--tRNA ligase beta subunit, found in Persephonella marina (strain DSM 14350 / EX-H1).